A 393-amino-acid polypeptide reads, in one-letter code: NAD(P)H-quinone oxidoreductase subunit H, chloroplastic (393 aa).

This sequence belongs to the complex I 49 kDa subunit family. As to quaternary structure, NDH is composed of at least 16 different subunits, 5 of which are encoded in the nucleus.

It localises to the plastid. The protein resides in the chloroplast thylakoid membrane. It carries out the reaction a plastoquinone + NADH + (n+1) H(+)(in) = a plastoquinol + NAD(+) + n H(+)(out). It catalyses the reaction a plastoquinone + NADPH + (n+1) H(+)(in) = a plastoquinol + NADP(+) + n H(+)(out). Functionally, NDH shuttles electrons from NAD(P)H:plastoquinone, via FMN and iron-sulfur (Fe-S) centers, to quinones in the photosynthetic chain and possibly in a chloroplast respiratory chain. The immediate electron acceptor for the enzyme in this species is believed to be plastoquinone. Couples the redox reaction to proton translocation, and thus conserves the redox energy in a proton gradient. This is NAD(P)H-quinone oxidoreductase subunit H, chloroplastic from Eucalyptus globulus subsp. globulus (Tasmanian blue gum).